The chain runs to 408 residues: Chaperonin GroEL (408 aa).

Residues 30–33, Lys-51, and 87–91 contribute to the ATP site; these read TLGP and DGTTT.

It belongs to the chaperonin (HSP60) family. Forms a cylinder of 14 subunits composed of two heptameric rings stacked back-to-back. Interacts with the co-chaperonin GroES.

It is found in the cytoplasm. The catalysed reaction is ATP + H2O + a folded polypeptide = ADP + phosphate + an unfolded polypeptide.. Together with its co-chaperonin GroES, plays an essential role in assisting protein folding. The GroEL-GroES system forms a nano-cage that allows encapsulation of the non-native substrate proteins and provides a physical environment optimized to promote and accelerate protein folding. The sequence is that of Chaperonin GroEL from Rickettsia rickettsii.